The chain runs to 460 residues: Wadjet protein JetA (460 aa).

Functionally, component of antiplasmid transformation system Wadjet type I, composed of JetA, JetB, JetC and JetD. Expression of Wadjet type I in B.subtilis (strain BEST7003) reduces the transformation efficiency of plasmid pHCMC05. This Bacillus cereus (strain Q1) protein is Wadjet protein JetA.